Consider the following 206-residue polypeptide: Large ribosomal subunit protein uL3 (206 aa).

The interval S127–A151 is disordered.

Belongs to the universal ribosomal protein uL3 family. Part of the 50S ribosomal subunit. Forms a cluster with proteins L14 and L19.

Functionally, one of the primary rRNA binding proteins, it binds directly near the 3'-end of the 23S rRNA, where it nucleates assembly of the 50S subunit. The chain is Large ribosomal subunit protein uL3 from Borreliella afzelii (strain PKo) (Borrelia afzelii).